Here is a 291-residue protein sequence, read N- to C-terminus: MAAGKEIRGKIKSVENTKKITKAMEMVAASKMRKAQERMRAARPYADKIRNITANLAQANPEYTHPFMAVSATAAKTAGFVVVTTDKGLCGGLNTNVLRAVTGKLRELESQGSKAEAVAIGNKGLGFLNRIGAKVVSHATQLGDAPHLERLIGPVKVLLDAYAEGKLNAVYLCYTRFINTMKQEPVVEQLLPLASDKLKADAGEHGWDYLYEPDAKTVIDDLLLRFVEALIYQAVAENMASEQSARMVAMKAATDNAGTLIGELKLVYNKTRQAAITKELSEIVSGAAAVG.

It belongs to the ATPase gamma chain family. As to quaternary structure, F-type ATPases have 2 components, CF(1) - the catalytic core - and CF(0) - the membrane proton channel. CF(1) has five subunits: alpha(3), beta(3), gamma(1), delta(1), epsilon(1). CF(0) has three main subunits: a, b and c.

It is found in the cell inner membrane. Produces ATP from ADP in the presence of a proton gradient across the membrane. The gamma chain is believed to be important in regulating ATPase activity and the flow of protons through the CF(0) complex. In Methylibium petroleiphilum (strain ATCC BAA-1232 / LMG 22953 / PM1), this protein is ATP synthase gamma chain.